We begin with the raw amino-acid sequence, 315 residues long: tRNA dimethylallyltransferase (315 aa).

18-25 (GPTASGKT) lines the ATP pocket. 20-25 (TASGKT) provides a ligand contact to substrate. Interaction with substrate tRNA stretches follow at residues 43 to 46 (DSAL), 167 to 171 (QRLSR), and 248 to 253 (RCVGYR).

This sequence belongs to the IPP transferase family. Monomer. Mg(2+) serves as cofactor.

The enzyme catalyses adenosine(37) in tRNA + dimethylallyl diphosphate = N(6)-dimethylallyladenosine(37) in tRNA + diphosphate. In terms of biological role, catalyzes the transfer of a dimethylallyl group onto the adenine at position 37 in tRNAs that read codons beginning with uridine, leading to the formation of N6-(dimethylallyl)adenosine (i(6)A). The protein is tRNA dimethylallyltransferase of Pseudoalteromonas atlantica (strain T6c / ATCC BAA-1087).